A 53-amino-acid chain; its full sequence is UPF0337 protein LJ_0034.1 (53 aa).

Residues 27-53 (AREVEGKAQQAKGKVKSKATEVKEDLE) form a disordered region. Residues 44–53 (KATEVKEDLE) are compositionally biased toward basic and acidic residues.

The protein belongs to the UPF0337 (CsbD) family.

This Lactobacillus johnsonii (strain CNCM I-12250 / La1 / NCC 533) protein is UPF0337 protein LJ_0034.1.